A 644-amino-acid chain; its full sequence is Exoribonuclease 2 (644 aa).

The 328-residue stretch at 189 to 516 (REDLTSLDFV…NHRLLKAVIK (328 aa)) folds into the RNB domain. The S1 motif domain maps to 561 to 643 (GTRFAAEIVD…ETRSIIARPV (83 aa)).

Belongs to the RNR ribonuclease family. RNase II subfamily.

The protein localises to the cytoplasm. It carries out the reaction Exonucleolytic cleavage in the 3'- to 5'-direction to yield nucleoside 5'-phosphates.. Its function is as follows. Involved in mRNA degradation. Hydrolyzes single-stranded polyribonucleotides processively in the 3' to 5' direction. In Shigella flexneri serotype 5b (strain 8401), this protein is Exoribonuclease 2.